We begin with the raw amino-acid sequence, 571 residues long: Potassium-transporting ATPase potassium-binding subunit (571 aa).

The next 12 helical transmembrane spans lie at G5–G25, L64–L84, G136–I156, L179–P199, V220–F240, L254–F274, W285–A305, F330–V350, I375–F395, M421–V441, L488–G508, and G527–F547.

Belongs to the KdpA family. The system is composed of three essential subunits: KdpA, KdpB and KdpC.

It localises to the cell inner membrane. In terms of biological role, part of the high-affinity ATP-driven potassium transport (or Kdp) system, which catalyzes the hydrolysis of ATP coupled with the electrogenic transport of potassium into the cytoplasm. This subunit binds the periplasmic potassium ions and delivers the ions to the membrane domain of KdpB through an intramembrane tunnel. This chain is Potassium-transporting ATPase potassium-binding subunit, found in Methylorubrum extorquens (strain PA1) (Methylobacterium extorquens).